Consider the following 249-residue polypeptide: DNA polymerase sliding clamp 3 (249 aa).

The protein belongs to the PCNA family. In terms of assembly, homotrimer. The subunits circularize to form a toroid; DNA passes through its center. Replication factor C (RFC) is required to load the toroid on the DNA.

In terms of biological role, sliding clamp subunit that acts as a moving platform for DNA processing. Responsible for tethering the catalytic subunit of DNA polymerase and other proteins to DNA during high-speed replication. The sequence is that of DNA polymerase sliding clamp 3 from Aeropyrum pernix (strain ATCC 700893 / DSM 11879 / JCM 9820 / NBRC 100138 / K1).